Reading from the N-terminus, the 307-residue chain is Alginate lyase (307 aa).

A signal peptide spans 1-20 (MLKSGVMVASLCLFSVPSRA).

Belongs to the polysaccharide lyase 7 family.

Its subcellular location is the secreted. The enzyme catalyses Eliminative cleavage of alginate to give oligosaccharides with 4-deoxy-alpha-L-erythro-hex-4-enuronosyl groups at their non-reducing ends and beta-D-mannuronate at their reducing end.. Degrades alginates that contain guluronic acid. The protein is Alginate lyase (alyA) of Klebsiella pneumoniae.